Reading from the N-terminus, the 232-residue chain is Uracil phosphoribosyltransferase (232 aa).

38–42 (KGLVR) is a binding site for GTP. Residues Arg-87, Arg-112, and 140–148 (DPMIATGST) each bind 5-phospho-alpha-D-ribose 1-diphosphate. Uracil is bound by residues Ile-204 and 209–211 (GDA). A 5-phospho-alpha-D-ribose 1-diphosphate-binding site is contributed by Asp-210.

It belongs to the UPRTase family. It depends on Mg(2+) as a cofactor.

The enzyme catalyses UMP + diphosphate = 5-phospho-alpha-D-ribose 1-diphosphate + uracil. It functions in the pathway pyrimidine metabolism; UMP biosynthesis via salvage pathway; UMP from uracil: step 1/1. With respect to regulation, allosterically activated by GTP. Its function is as follows. Catalyzes the conversion of uracil and 5-phospho-alpha-D-ribose 1-diphosphate (PRPP) to UMP and diphosphate. The chain is Uracil phosphoribosyltransferase from Methanococcus vannielii (strain ATCC 35089 / DSM 1224 / JCM 13029 / OCM 148 / SB).